The sequence spans 1634 residues: Probable serine/threonine-protein kinase DDB_G0282895 (1634 aa).

The stretch at 40-63 (YKGNLNENKLKNGKGTFLFPNSIY) is one MORN 1 repeat. Positions 84–131 (QKIQKKSSQSKSQQQPPSQTKKSSSPINLSPRLQGQNPTITTNGSNNN) are disordered. Positions 89–109 (KSSQSKSQQQPPSQTKKSSSP) are enriched in low complexity. Residues 110–119 (INLSPRLQGQ) are compositionally biased toward polar residues. Low complexity predominate over residues 120–131 (NPTITTNGSNNN). The stretch at 169–191 (YNGKWINGKANGIGCFHFSKDDS) is one MORN 2 repeat. Low complexity-rich tracts occupy residues 273 to 292 (SNNNSNGTTSPTSPSILSPT) and 318 to 339 (SGSGFCSPSSSLSIKMSSPISS). 3 disordered regions span residues 273 to 367 (SNNN…QQQQ), 658 to 750 (TTAT…TFSV), and 783 to 816 (SSILNNNNNNNNNNNNNNNNNNNNNNNNNNNCGQ). The span at 340–351 (GLQHSKTQPNVS) shows a compositional bias: polar residues. 3 stretches are compositionally biased toward low complexity: residues 352 to 367 (QSQNQQIQQQQQQQQQ), 658 to 688 (TTATPNNNNNSSGNSKLTTTTHLTNNTTTTT), and 703 to 715 (PPSQSSSSSSPSS). The span at 716–732 (DQTNLPSIAISSSNGIS) shows a compositional bias: polar residues. The span at 787–813 (NNNNNNNNNNNNNNNNNNNNNNNNNNN) shows a compositional bias: low complexity. Residues 1255–1275 (IFIGFMELCVIDELCGFSFIY) traverse the membrane as a helical segment. A Protein kinase domain is found at 1377–1634 (LQILQFLGEG…IIQKLCNHKC (258 aa)). ATP-binding positions include 1383-1391 (LGEGALAEV) and Lys1404. The active-site Proton acceptor is Asp1500.

Belongs to the protein kinase superfamily. TKL Ser/Thr protein kinase family.

It localises to the membrane. The enzyme catalyses L-seryl-[protein] + ATP = O-phospho-L-seryl-[protein] + ADP + H(+). It carries out the reaction L-threonyl-[protein] + ATP = O-phospho-L-threonyl-[protein] + ADP + H(+). The protein is Probable serine/threonine-protein kinase DDB_G0282895 of Dictyostelium discoideum (Social amoeba).